The chain runs to 293 residues: Phosphoribosylaminoimidazole-succinocarboxamide synthase (293 aa).

The protein belongs to the SAICAR synthetase family.

The enzyme catalyses 5-amino-1-(5-phospho-D-ribosyl)imidazole-4-carboxylate + L-aspartate + ATP = (2S)-2-[5-amino-1-(5-phospho-beta-D-ribosyl)imidazole-4-carboxamido]succinate + ADP + phosphate + 2 H(+). Its pathway is purine metabolism; IMP biosynthesis via de novo pathway; 5-amino-1-(5-phospho-D-ribosyl)imidazole-4-carboxamide from 5-amino-1-(5-phospho-D-ribosyl)imidazole-4-carboxylate: step 1/2. This chain is Phosphoribosylaminoimidazole-succinocarboxamide synthase, found in Bordetella petrii (strain ATCC BAA-461 / DSM 12804 / CCUG 43448).